A 132-amino-acid polypeptide reads, in one-letter code: Small ribosomal subunit protein uS9 (132 aa).

Residues 101–132 (KRAGLLTRDPRMKERKKPGLKAARRSPQFSKR) form a disordered region. Residues 113–132 (KERKKPGLKAARRSPQFSKR) show a composition bias toward basic residues.

This sequence belongs to the universal ribosomal protein uS9 family.

In Staphylococcus aureus (strain USA300), this protein is Small ribosomal subunit protein uS9.